A 294-amino-acid chain; its full sequence is Thymidylate synthase 1/2 (294 aa).

DUMP contacts are provided by residues arginine 29 and arginine 154–arginine 155. Cysteine 174 acts as the Nucleophile in catalysis. DUMP is bound by residues arginine 194–aspartate 197, asparagine 205, and histidine 235–tyrosine 237. Residue aspartate 197 coordinates (6R)-5,10-methylene-5,6,7,8-tetrahydrofolate.

Belongs to the thymidylate synthase family.

The catalysed reaction is dUMP + (6R)-5,10-methylene-5,6,7,8-tetrahydrofolate = 7,8-dihydrofolate + dTMP. The protein operates within pyrimidine metabolism; dTTP biosynthesis. This chain is Thymidylate synthase 1/2 (TS-1), found in Encephalitozoon cuniculi (strain GB-M1) (Microsporidian parasite).